We begin with the raw amino-acid sequence, 344 residues long: Succinylglutamate desuccinylase (344 aa).

Zn(2+) contacts are provided by histidine 63, glutamate 66, and histidine 160. The active site involves glutamate 224.

This sequence belongs to the AspA/AstE family. Succinylglutamate desuccinylase subfamily. Requires Zn(2+) as cofactor.

It catalyses the reaction N-succinyl-L-glutamate + H2O = L-glutamate + succinate. Its pathway is amino-acid degradation; L-arginine degradation via AST pathway; L-glutamate and succinate from L-arginine: step 5/5. In terms of biological role, transforms N(2)-succinylglutamate into succinate and glutamate. The chain is Succinylglutamate desuccinylase from Shewanella sp. (strain MR-4).